A 263-amino-acid polypeptide reads, in one-letter code: Putative inactive caspase B (263 aa).

Residues 1–8 (MMCEDASD) constitute a propeptide, removed in mature form by cps-1 or ced-3.

It belongs to the peptidase C14A family. As to quaternary structure, interacts with ced-3 (via large subunit p17 or small subunit p13); the interaction inhibits ced-3 autoactivation. Post-translationally, cleavage by csp-1 isoform b or ced-3 removes the propeptide and generates subunit p31 in vitro. An additional cleavage at Asp-149 generates the 2 subunits p17 and p14 but this cleavage appears to be less efficient. In terms of tissue distribution, specifically expressed in the hermaphrodite germline.

Its subcellular location is the cytoplasm. Functionally, putative inactive caspase. In the germline, binds caspase ced-3 zymogen and prevents ced-3 autoactivation. Does not affect the caspase activity of mature ced-3 and ced-4-mediated mature ced-3 activation. Negatively regulates germline apoptosis by inhibiting autocleavage of caspase ced-3. Involved in fertility. Putative inactive caspase. Dispensable for the inhibition of germline apoptosis. The chain is Putative inactive caspase B from Caenorhabditis elegans.